An 81-amino-acid chain; its full sequence is MENSNKVPISKIGLIMLMIFSTFFMSPHARRLEGGSNIDSQRLLHELMVDRIKQKRSRTDLEDKAVPGDRLSPGGPNHIHN.

An N-terminal signal peptide occupies residues Met-1–Arg-31. A compositionally biased stretch (basic and acidic residues) spans Lys-55–Pro-67. The tract at residues Lys-55 to Asn-81 is disordered. Pro-73 and Pro-76 each carry hydroxyproline. Pro-76 is a glycosylation site (O-linked (Ara...) hydroxyproline).

It belongs to the CLV3/ESR signal peptide family. Post-translationally, the O-glycosylation (arabinosylation) of the hydroxyproline Pro-76 enhances binding affinity of the CLE12p peptide for its receptor. As to expression, expressed in young nodules throughout the central tissue. Expressed in the apical region of elongated nodules, corresponding to the meristematic and early infection zones.

It is found in the secreted. The protein localises to the extracellular space. Its function is as follows. Signaling peptide involved in the regulation of nodulation. Moves from root to shoot to function with the receptor kinase SUNN, in a signaling pathway that plays roles during cellular differentiation, both at the onset of nodulation, and later during nodule meristem development and subsequent homeostasis. Interacts with SUNN signaling to control nodule numbers. SUNN is involved in the autoregulation of nodulation (AON), a long distance systemic signaling from root to shoot and back again, which allows legumes to limit the number of root nodules formed based on available nitrogen and previous rhizobial colonization. This chain is CLAVATA3/ESR (CLE)-related protein 12, found in Medicago truncatula (Barrel medic).